A 359-amino-acid chain; its full sequence is 3-dehydroquinate synthase (359 aa).

Residues 71–76, 105–109, 129–130, lysine 142, and lysine 151 each bind NAD(+); these read DGEAYK, GVVGD, and TT. Zn(2+) is bound by residues glutamate 184, histidine 247, and histidine 264.

The protein belongs to the sugar phosphate cyclases superfamily. Dehydroquinate synthase family. The cofactor is Co(2+). Zn(2+) serves as cofactor. Requires NAD(+) as cofactor.

It localises to the cytoplasm. The enzyme catalyses 7-phospho-2-dehydro-3-deoxy-D-arabino-heptonate = 3-dehydroquinate + phosphate. It functions in the pathway metabolic intermediate biosynthesis; chorismate biosynthesis; chorismate from D-erythrose 4-phosphate and phosphoenolpyruvate: step 2/7. Functionally, catalyzes the conversion of 3-deoxy-D-arabino-heptulosonate 7-phosphate (DAHP) to dehydroquinate (DHQ). This Burkholderia cenocepacia (strain ATCC BAA-245 / DSM 16553 / LMG 16656 / NCTC 13227 / J2315 / CF5610) (Burkholderia cepacia (strain J2315)) protein is 3-dehydroquinate synthase.